We begin with the raw amino-acid sequence, 400 residues long: Enoyl-[acyl-carrier-protein] reductase [NADH] 1 (400 aa).

NAD(+) is bound by residues 48-53, 74-75, 111-112, and 139-140; these read GSSSGY, FE, DA, and LA. Residue Y225 coordinates substrate. Y235 acts as the Proton donor in catalysis. NAD(+) contacts are provided by residues K244 and 273–275; that span reads VVT.

This sequence belongs to the TER reductase family. As to quaternary structure, monomer.

It carries out the reaction a 2,3-saturated acyl-[ACP] + NAD(+) = a (2E)-enoyl-[ACP] + NADH + H(+). The protein operates within lipid metabolism; fatty acid biosynthesis. Involved in the final reduction of the elongation cycle of fatty acid synthesis (FAS II). Catalyzes the reduction of a carbon-carbon double bond in an enoyl moiety that is covalently linked to an acyl carrier protein (ACP). The protein is Enoyl-[acyl-carrier-protein] reductase [NADH] 1 of Photobacterium profundum (strain SS9).